A 173-amino-acid polypeptide reads, in one-letter code: Probable DNA-directed RNA polymerase subunit delta (173 aa).

One can recognise an HTH HARE-type domain in the interval 14–81 (NSFIDLAYMA…GEYMWGLRDW (68 aa)). Positions 113–173 (LLGEDEVEDE…DEFDDEEEEE (61 aa)) are disordered. Residues 115–173 (GEDEVEDELDLLPSDGDEENVDTEDEEVEDELDEAGLVVEPDEEFEDEEDEFDDEEEEE) are compositionally biased toward acidic residues.

The protein belongs to the RpoE family. As to quaternary structure, RNAP is composed of a core of 2 alpha, a beta and a beta' subunits. The core is associated with a delta subunit and one of several sigma factors.

Its function is as follows. Participates in both the initiation and recycling phases of transcription. In the presence of the delta subunit, RNAP displays an increased specificity of transcription, a decreased affinity for nucleic acids, and an increased efficiency of RNA synthesis because of enhanced recycling. The chain is Probable DNA-directed RNA polymerase subunit delta from Macrococcus caseolyticus (strain JCSC5402) (Macrococcoides caseolyticum).